The following is a 786-amino-acid chain: Protein RDM16 (786 aa).

Composition is skewed to basic and acidic residues over residues 1-80 (MDKE…SRDR), 87-112 (RSHEGSKEKESRSKRKDREEENGARD), and 123-143 (NGERRSRFEDVAIEVENKDAQ). Disordered regions lie at residues 1–223 (MDKE…SANL), 255–283 (KKATKPTSEGSPHTRVPPSTTTPAVSTGT), 532–557 (RPIEPPAEAAPPPPQPLKLTKKEQKK), and 616–642 (EREQAHTDRNAARKLTPAEKREKKERK). The segment covering 145–164 (SEGSGATNPTSGVTMGASTY) has biased composition (polar residues). Low complexity predominate over residues 165 to 176 (SSIPSEASAAPS). The span at 177–189 (QTLLTKVSSISTT) shows a compositional bias: polar residues. Residues 190–203 (DENKASVVRSHEVP) are compositionally biased toward basic and acidic residues. Positions 268–283 (TRVPPSTTTPAVSTGT) are enriched in low complexity. Over residues 534-547 (IEPPAEAAPPPPQP) the composition is skewed to pro residues.

It localises to the nucleus. It is found in the nucleoplasm. In terms of biological role, functions in the RNA-directed DNA methylation (RdDM) pathway. Acts as a pre-mRNA splicing factor, likely by affecting Pol V transcripts. Affects DNA methylation of transposable elements (TEs) and preferentially influences NRPD1- and ROS1-targeted loci. This Arabidopsis thaliana (Mouse-ear cress) protein is Protein RDM16.